Here is a 594-residue protein sequence, read N- to C-terminus: MVLLHVLFEHAVGYALLALKEVEEISLLQPQVEESVLNLGKFHSIVRLVAFCPFASSQVALENANAVSEGVVHEDLRLLLETHLPSKKKKVLLGVGDPKIGAAIQEELGYNCQTGGVIAEILRGVRLHFHNLVKGLTDLSACKAQLGLGHSYSRAKVKFNVNRVDNMIIQSISLLDQLDKDINTFSMRVREWYGYHFPELVKIINDNATYCRLAQFIGNRRELNEDKLEKLEELTMDGAKAKAILDASRSSMGMDISAIDLINIESFSSRVVSLSEYRQSLHTYLRSKMSQVAPSLSALIGEAVGARLIAHAGSLTNLAKYPASTVQILGAEKALFRALKTRGNTPKYGLIFHSTFIGRAAAKNKGRISRYLANKCSIASRIDCFSEVPTSVFGEKLREQVEERLSFYETGEIPRKNLDVMKEAMVQAEEAAAEITRKLEKQEKKRLKKEKKRLAALALASSENSSSTPEECEEMSEKPKKKKKQKPQEVPQENGMEDPSISFSKPKKKKSFSKEELMSSDLEETAGSTSIPKRKKSTPKEETVNDPEEAGHRSGSKKKRKFSKEEPVSSGPEEAVGKSSSKKKKKFHKASQED.

Residues Lys-87, Lys-230, and Lys-240 each participate in a glycyl lysine isopeptide (Lys-Gly) (interchain with G-Cter in SUMO2) cross-link. In terms of domain architecture, Nop spans 292-410 (VAPSLSALIG…VEERLSFYET (119 aa)). A Phosphoserine modification is found at Ser-314. Omega-N-methylarginine is present on Arg-359. Low complexity-rich tracts occupy residues 458–469 (ALASSENSSSTP) and 488–504 (QEVP…ISFS). Residues 458–594 (ALASSENSSS…KKFHKASQED (137 aa)) form a disordered region. 2 positions are modified to phosphoserine: Ser-466 and Ser-467. Residue Thr-468 is modified to Phosphothreonine. Phosphoserine occurs at positions 511, 519, 520, and 537. Residue Lys-540 forms a Glycyl lysine isopeptide (Lys-Gly) (interchain with G-Cter in SUMO2) linkage. Lys-561 carries the N6-acetyllysine modification. Ser-563 is modified (phosphoserine). A Glycyl lysine isopeptide (Lys-Gly) (interchain with G-Cter in SUMO2) cross-link involves residue Lys-564. A phosphoserine mark is found at Ser-569, Ser-570, Ser-579, and Ser-581. The segment covering 580–594 (SSKKKKKFHKASQED) has biased composition (basic residues).

Belongs to the NOP5/NOP56 family. As to quaternary structure, part of a large pre-ribosomal ribonucleoprotein (RNP) complex, that consists of at least 62 ribosomal proteins, 45 nonribosomal proteins and both pre-rRNA and mature rRNA species. Within this complex directly interacts with TCOF1 in an RNA-independent manner. Core component of box C/D small nucleolar ribonucleoprotein (snoRNP) particles; the core proteins SNU13, NOP56, NOP58 and FBL or FBLL1 assemble stepwise onto the snoRNA. Interacts with NOP1 and NOP58. Interacts with NUFIP1, RUVBL1 and RUVBL2; RUVBL1:RUVBL2 seem to bridge the association of NOP56 with NUFIP1. Part of the small subunit (SSU) processome, composed of more than 70 proteins and the RNA chaperone small nucleolar RNA (snoRNA) U3. Interacts with NOP2 and FBL.

The protein localises to the nucleus. The protein resides in the nucleolus. It is found in the cytoplasm. It localises to the nucleoplasm. In terms of biological role, involved in the early to middle stages of 60S ribosomal subunit biogenesis. Required for the biogenesis of box C/D snoRNAs such U3, U8 and U14 snoRNAs. Part of the small subunit (SSU) processome, first precursor of the small eukaryotic ribosomal subunit. During the assembly of the SSU processome in the nucleolus, many ribosome biogenesis factors, an RNA chaperone and ribosomal proteins associate with the nascent pre-rRNA and work in concert to generate RNA folding, modifications, rearrangements and cleavage as well as targeted degradation of pre-ribosomal RNA by the RNA exosome. Core component of box C/D small nucleolar ribonucleoprotein (snoRNP) complexes that function in methylation of multiple sites on ribosomal RNAs (rRNAs) and messenger RNAs (mRNAs). This Homo sapiens (Human) protein is Nucleolar protein 56.